The chain runs to 396 residues: Putative nickel insertion protein (396 aa).

Positions 333–355 are disordered; that stretch reads RSKLARESQTVETPDGPAKGKTV.

It belongs to the LarC family.

The chain is Putative nickel insertion protein from Rhodopirellula baltica (strain DSM 10527 / NCIMB 13988 / SH1).